Reading from the N-terminus, the 887-residue chain is MERRQFNTSNIRNGTGRPRKTPRSKLYMVYPPLSGEDSTNPEPEEGSSQENNPTEPSSSQSNSVQNQDQSEDQSQLPQQESNTQQESNTQQESNTPSPRASNTSTETPAPLSPIQPGIRNIPSGLLLPQEKVGRLMGYPFYRDFNFTLNPERYQKLIYVFQILKNAARNHRNGASLLRKYFSLARRSKRTTDMFVTTIEEMRKRSLENSRKRELEEAQEREESNKRQHTESSAEPNAESSTESTTESNAESGAEPNAEPSAESTTESNVESGAEPNAESGAESGAEPTAESNAELKQRIWEILSYRLEQSNNETNNTGESNSTSQQPRQLPNNELIMNIRVLQKNTHAKPVLGRIKFTPDKSNKTSLTGSQNKVHSTNTQQSQKHPQQILTNSETHKPQQYSAQSQQQMVHQTNSHEPSQKRSPPPQQQQQKQPSVPTSSVPLQVSQKQNQQQQELPLPPQPQPQQRTAPSAVKQQQSMQMQPPPQQQQQQQRHQPLQQSPPTMPLQQQPVPPVQQVQTVPPPSSQPQTQLSQQQQQQQQAQLQMQVPRCYQYQNRPPSQQRQYSQTPQYNQPPPQQKVYALPPQQVYAPPPRQVYAQPTIACKQQYPQQLYEQAPQEGSSYQHHYQQVQQRQNQQPYMQSAPTYQQPHVQTPKSTRSNKQEKQRLPKGQEQVPKATRTMFEAFTGSNIAVEKLRQRTLDNGREPERLRTEYVNVLSSPERAAEKSTSRSKQSSNQKPVVKQQSSFPPPIKHQQTQEQQGNILPPVSQLLAIQSSTVTSRGSNASGAVMGSGNTQRVASRSFTNTFVAEAVVNNANNRGGPVPPTGPETNTRGGRASTRSSGRPRGNRSTQRAEGNVTGRVARSTDGSQSQNSGKASKISNIRNLLN.

The span at 1–13 shows a compositional bias: polar residues; it reads MERRQFNTSNIRN. Disordered regions lie at residues 1–117, 203–293, 311–330, 350–542, 555–578, 614–675, 696–758, and 813–887; these read MERR…IQPG, KRSL…ESNA, NNET…PRQL, PVLG…QQAQ, NRPP…PQQK, QAPQ…QVPK, QRTL…TQEQ, and NNAN…NLLN. The segment covering 57–75 has biased composition (low complexity); the sequence is SSSQSNSVQNQDQSEDQSQ. The segment covering 76-107 has biased composition (polar residues); the sequence is LPQQESNTQQESNTQQESNTPSPRASNTSTET. Positions 199-234 form a coiled coil; that stretch reads EEMRKRSLENSRKRELEEAQEREESNKRQHTESSAE. Over residues 203-231 the composition is skewed to basic and acidic residues; sequence KRSLENSRKRELEEAQEREESNKRQHTES. Positions 232 to 254 are enriched in low complexity; that stretch reads SAEPNAESSTESTTESNAESGAE. Over residues 261–270 the composition is skewed to polar residues; sequence AESTTESNVE. The segment covering 311–326 has biased composition (low complexity); sequence NNETNNTGESNSTSQQ. Over residues 364–393 the composition is skewed to polar residues; it reads KTSLTGSQNKVHSTNTQQSQKHPQQILTNS. Low complexity-rich tracts occupy residues 399-408, 428-456, 475-519, and 526-542; these read QQYSAQSQQQ, QQQQ…QQEL, QQQS…QVQT, and QPQT…QQAQ. Over residues 622–640 the composition is skewed to low complexity; that stretch reads YQHHYQQVQQRQNQQPYMQ. The span at 641–658 shows a compositional bias: polar residues; it reads SAPTYQQPHVQTPKSTRS. Over residues 696–710 the composition is skewed to basic and acidic residues; that stretch reads QRTLDNGREPERLRT. The segment covering 729–745 has biased composition (polar residues); the sequence is RSKQSSNQKPVVKQQSS. Residues 829–844 are compositionally biased toward low complexity; it reads TNTRGGRASTRSSGRP. Residues 865-887 show a composition bias toward polar residues; it reads TDGSQSQNSGKASKISNIRNLLN.

The protein resides in the nucleus. In terms of biological role, transcriptional regulator involved in extension of germ tubes into elongated hyphae and maintenance of filamentous growth. Regulates expression of UME6. Acts in a pathway that regulates maintenance of hyphal growth by repressing hyphal-to-yeast transition and allows dissemination within host epithelial tissues. Dispensable for invasion into both host oral epithelial cells and enterocytes, but required for epithelial damage. The chain is Transcriptional regulator DEF1 (DEF1) from Candida albicans (strain SC5314 / ATCC MYA-2876) (Yeast).